Consider the following 362-residue polypeptide: Oryzain gamma chain (362 aa).

Positions 1–24 (MAHRRIILLLAAAAVAATSAVAAA) are cleaved as a signal peptide. A propeptide spans 25 to 144 (SSGFDDSNPI…GNHRMRDAAA (120 aa)) (activation peptide). Residue Asn128 is glycosylated (N-linked (GlcNAc...) asparagine). Disulfide bonds link Cys166-Cys209 and Cys200-Cys242. Cys169 is an active-site residue. Asn258 carries an N-linked (GlcNAc...) asparagine glycan. The cysteines at positions 300 and 350 are disulfide-linked. Catalysis depends on residues His309 and Asn329.

The protein belongs to the peptidase C1 family. As to expression, expressed only in seeds.

The polypeptide is Oryzain gamma chain (Oryza sativa subsp. japonica (Rice)).